The primary structure comprises 506 residues: 2,3-bisphosphoglycerate-independent phosphoglycerate mutase (506 aa).

Mn(2+) is bound by residues aspartate 13 and serine 63. Serine 63 serves as the catalytic Phosphoserine intermediate. Substrate contacts are provided by residues histidine 124, 153-154 (RD), arginine 183, arginine 189, 255-258 (RADR), and lysine 331. Residues aspartate 397, histidine 401, aspartate 438, histidine 439, and histidine 457 each coordinate Mn(2+).

It belongs to the BPG-independent phosphoglycerate mutase family. Monomer. Mn(2+) serves as cofactor.

It carries out the reaction (2R)-2-phosphoglycerate = (2R)-3-phosphoglycerate. The protein operates within carbohydrate degradation; glycolysis; pyruvate from D-glyceraldehyde 3-phosphate: step 3/5. In terms of biological role, catalyzes the interconversion of 2-phosphoglycerate and 3-phosphoglycerate. The chain is 2,3-bisphosphoglycerate-independent phosphoglycerate mutase from Ruegeria sp. (strain TM1040) (Silicibacter sp.).